The sequence spans 246 residues: Probable phosphatase ASA_1316 (246 aa).

The Zn(2+) site is built by His8, His10, His16, His41, Glu74, His102, His132, Asp193, and His195.

The protein belongs to the PHP family. It depends on Zn(2+) as a cofactor.

This is Probable phosphatase ASA_1316 from Aeromonas salmonicida (strain A449).